Consider the following 208-residue polypeptide: Uracil phosphoribosyltransferase (208 aa).

Residues R78, R103, and 130–138 (DPMLATGGS) contribute to the 5-phospho-alpha-D-ribose 1-diphosphate site. Uracil is bound by residues I193 and 198-200 (GDA). Position 199 (D199) interacts with 5-phospho-alpha-D-ribose 1-diphosphate.

The protein belongs to the UPRTase family. The cofactor is Mg(2+).

It catalyses the reaction UMP + diphosphate = 5-phospho-alpha-D-ribose 1-diphosphate + uracil. It functions in the pathway pyrimidine metabolism; UMP biosynthesis via salvage pathway; UMP from uracil: step 1/1. With respect to regulation, allosterically activated by GTP. Functionally, catalyzes the conversion of uracil and 5-phospho-alpha-D-ribose 1-diphosphate (PRPP) to UMP and diphosphate. The polypeptide is Uracil phosphoribosyltransferase (Desulfovibrio desulfuricans (strain ATCC 27774 / DSM 6949 / MB)).